The chain runs to 264 residues: Thymidylate synthase (264 aa).

A dUMP-binding site is contributed by Arg21. His51 serves as a coordination point for (6R)-5,10-methylene-5,6,7,8-tetrahydrofolate. 126–127 (RR) is a dUMP binding site. Catalysis depends on Cys146, which acts as the Nucleophile. DUMP contacts are provided by residues 166–169 (RSCD), Asn177, and 207–209 (HLY). Residue Asp169 coordinates (6R)-5,10-methylene-5,6,7,8-tetrahydrofolate. Ala263 serves as a coordination point for (6R)-5,10-methylene-5,6,7,8-tetrahydrofolate.

It belongs to the thymidylate synthase family. Bacterial-type ThyA subfamily. Homodimer.

Its subcellular location is the cytoplasm. The enzyme catalyses dUMP + (6R)-5,10-methylene-5,6,7,8-tetrahydrofolate = 7,8-dihydrofolate + dTMP. It participates in pyrimidine metabolism; dTTP biosynthesis. Catalyzes the reductive methylation of 2'-deoxyuridine-5'-monophosphate (dUMP) to 2'-deoxythymidine-5'-monophosphate (dTMP) while utilizing 5,10-methylenetetrahydrofolate (mTHF) as the methyl donor and reductant in the reaction, yielding dihydrofolate (DHF) as a by-product. This enzymatic reaction provides an intracellular de novo source of dTMP, an essential precursor for DNA biosynthesis. The chain is Thymidylate synthase from Shewanella amazonensis (strain ATCC BAA-1098 / SB2B).